Reading from the N-terminus, the 434-residue chain is Methylenetetrahydrofolate--tRNA-(uracil-5-)-methyltransferase TrmFO (434 aa).

G8 to G13 is an FAD binding site.

Belongs to the MnmG family. TrmFO subfamily. It depends on FAD as a cofactor.

The protein localises to the cytoplasm. The catalysed reaction is uridine(54) in tRNA + (6R)-5,10-methylene-5,6,7,8-tetrahydrofolate + NADH + H(+) = 5-methyluridine(54) in tRNA + (6S)-5,6,7,8-tetrahydrofolate + NAD(+). The enzyme catalyses uridine(54) in tRNA + (6R)-5,10-methylene-5,6,7,8-tetrahydrofolate + NADPH + H(+) = 5-methyluridine(54) in tRNA + (6S)-5,6,7,8-tetrahydrofolate + NADP(+). Its function is as follows. Catalyzes the folate-dependent formation of 5-methyl-uridine at position 54 (M-5-U54) in all tRNAs. This chain is Methylenetetrahydrofolate--tRNA-(uracil-5-)-methyltransferase TrmFO, found in Exiguobacterium sibiricum (strain DSM 17290 / CCUG 55495 / CIP 109462 / JCM 13490 / 255-15).